Reading from the N-terminus, the 355-residue chain is MGMSLQLLGINLRIKVILATSWLFENIAKVCGYPTKTLGMPIRTDVIPGYGLPIHQTRVPPFANPTTFLEAVFGNIPQPSTIEKFYYESPQDGYYNFYIPHYRNVVFLPDWLSKWIQLHFDLGIDTVGLETIRNTLFSMLVYFYFFAELRIMLSYFISINPYTRPWVYLISLTDWIYDILFHLGISKRVVLLGFPLLPILIHAALGNLIDSLNHLVFTMPFLPSEGEPGEFLIDGTARKVLLFRYLPALWTSEPIPDRLREFWYTERPEIYQFMKKNYGHLDIDFLPDEILKQIYQFKHDQIDPNSLTKNVEQFKVLGAQLISDSTIDFYQFSNCFVHKQEILFTFFSDYMDRLI.

Belongs to the ycf89 family.

It localises to the plastid. The protein localises to the chloroplast. This is an uncharacterized protein from Trieres chinensis (Marine centric diatom).